Reading from the N-terminus, the 370-residue chain is Cytochrome b (370 aa).

Helical transmembrane passes span 25 to 45 (FGSMLIACSTLQVLTGFFLAV), 69 to 90 (WLMQNLHAIGASMFFICIYIHI), 105 to 125 (WLSGTTLLIMLMATAFFGYVL), and 170 to 190 (FFALHFILPFGIISMSSLHVM). 2 residues coordinate heme b: H75 and H89. The heme b site is built by H174 and H188. H193 contacts a ubiquinone. The next 4 membrane-spanning stretches (helical) occupy residues 218 to 238 (YKDLLMLAAMTTLLLLIVSFS), 280 to 300 (LGGALALTMSIVILLTVPFTH), 312 to 332 (FMQMTFWLFAATFMVITWTAT), and 339 to 358 (FTLIGQAASMIYFLFFISNP).

Belongs to the cytochrome b family. As to quaternary structure, the cytochrome bc1 complex contains 3 respiratory subunits (MT-CYB, CYC1 and UQCRFS1), 2 core proteins (UQCRC1 and UQCRC2) and probably 6 low-molecular weight proteins. Heme b is required as a cofactor.

Its subcellular location is the mitochondrion inner membrane. In terms of biological role, component of the ubiquinol-cytochrome c reductase complex (complex III or cytochrome b-c1 complex) that is part of the mitochondrial respiratory chain. The b-c1 complex mediates electron transfer from ubiquinol to cytochrome c. Contributes to the generation of a proton gradient across the mitochondrial membrane that is then used for ATP synthesis. This Eunectes notaeus (Yellow anaconda) protein is Cytochrome b (MT-CYB).